Reading from the N-terminus, the 260-residue chain is Glutamate racemase (260 aa).

Residues 14 to 15 (DS) and 46 to 47 (YG) contribute to the substrate site. The active-site Proton donor/acceptor is Cys77. 78–79 (NT) serves as a coordination point for substrate. Catalysis depends on Cys188, which acts as the Proton donor/acceptor. Substrate is bound at residue 189–190 (TH).

It belongs to the aspartate/glutamate racemases family.

It catalyses the reaction L-glutamate = D-glutamate. The protein operates within cell wall biogenesis; peptidoglycan biosynthesis. In terms of biological role, provides the (R)-glutamate required for cell wall biosynthesis. The chain is Glutamate racemase from Clostridium perfringens (strain 13 / Type A).